The primary structure comprises 553 residues: Urocanate hydratase (553 aa).

NAD(+) is bound by residues 45–46 (GG), Gln123, 169–171 (GMG), Asp189, Arg194, 235–236 (NA), 256–260 (QTSAH), 266–267 (YV), Tyr315, and Gly485.

This sequence belongs to the urocanase family. The cofactor is NAD(+).

It localises to the cytoplasm. The catalysed reaction is 4-imidazolone-5-propanoate = trans-urocanate + H2O. Its pathway is amino-acid degradation; L-histidine degradation into L-glutamate; N-formimidoyl-L-glutamate from L-histidine: step 2/3. Its function is as follows. Catalyzes the conversion of urocanate to 4-imidazolone-5-propionate. This is Urocanate hydratase from Staphylococcus aureus (strain Mu50 / ATCC 700699).